We begin with the raw amino-acid sequence, 92 residues long: Large ribosomal subunit protein eL37 (92 aa).

Zn(2+)-binding residues include cysteine 19, cysteine 22, cysteine 34, and cysteine 37. The C4-type zinc finger occupies 19–37 (CRRCGRRSYHIQKSTCANC). Positions 50–92 (SEKAKRRKTTGSGRTAHLRDVHRRFKNGFQVGTPKGARGPENH) are disordered.

This sequence belongs to the eukaryotic ribosomal protein eL37 family. It depends on Zn(2+) as a cofactor.

Its function is as follows. Binds to the 23S rRNA. In Emericella nidulans (strain FGSC A4 / ATCC 38163 / CBS 112.46 / NRRL 194 / M139) (Aspergillus nidulans), this protein is Large ribosomal subunit protein eL37 (rpl37).